A 350-amino-acid polypeptide reads, in one-letter code: HTH-type DNA-binding transcriptional activator EutR (350 aa).

Residues 243-344 enclose the HTH araC/xylS-type domain; sequence SRAREYVLEN…AEKPSLTLHQ (102 aa). DNA-binding regions (H-T-H motif) lie at residues 260-281 and 311-334; these read LDLC…HAIL and VKDA…QQLF.

Its pathway is amine and polyamine degradation; ethanolamine degradation. Its function is as follows. Activates the transcription of the eut operon, allowing utilization of ethanolamine (EA). Positively regulates its own transcription. Probably binds EA and vitamin B12 as effectors. Competes with ethanolamine ammonia-lysase (EAL, the first enzyme in the EA degradation pathway) for adenosylcobalamin. Ethanolamine-associated signaling mediated via this protein, but not EA degradation, impacts S.typhimurium survival within macrophages. Binds the promoter of ssrB and eutS in vitro; in mouse infection models binding to ssrB probably induces all 4 operons of pathogenicity island SPI-2. Expression of the eut operon allows this bacteria to use ethanolamine (EA) as a carbon, nitrogen and energy source. It relies on cobalamin (vitamin B12) both as a cofactor for the ethanolamine ammonia-lyase (EAL) activity and to induce the operon. EA enhances bacterial survival in macrophages in a concentration-dependent manner, suggesting it is an important nutrient in infection. The polypeptide is HTH-type DNA-binding transcriptional activator EutR (Salmonella typhimurium (strain LT2 / SGSC1412 / ATCC 700720)).